Consider the following 400-residue polypeptide: Renin (400 aa).

The N-terminal stretch at 1 to 23 is a signal peptide; the sequence is MDAWRGMPRWGLLLLLWGSCTFG. A propeptide spans 24–60 (activation peptide); sequence LPTETTTFKRISLKRMPSIRESLKERGVDMARLGPER. Asn65 carries an N-linked (GlcNAc...) asparagine glycan. The region spanning 80–397 is the Peptidase A1 domain; the sequence is YYGEIGIGTP…DRGNNRIGFA (318 aa). Asp98 is an active-site residue. Residues Cys111 and Cys118 are joined by a disulfide bond. A glycan (N-linked (GlcNAc...) asparagine) is linked at Asn135. Cys277 and Cys281 are disulfide-bonded. The active site involves Asp286. Cys319 and Cys356 form a disulfide bridge.

This sequence belongs to the peptidase A1 family. In terms of assembly, interacts with ATP6AP2.

The protein localises to the secreted. Its subcellular location is the membrane. The catalysed reaction is Cleavage of Leu-|-Xaa bond in angiotensinogen to generate angiotensin I.. With respect to regulation, interaction with ATP6AP2 results in a 5-fold increased efficiency in angiotensinogen processing. Its function is as follows. Renin is a highly specific endopeptidase, whose only known function is to generate angiotensin I from angiotensinogen in the plasma, initiating a cascade of reactions that produce an elevation of blood pressure and increased sodium retention by the kidney. This chain is Renin (REN), found in Callithrix jacchus (White-tufted-ear marmoset).